Consider the following 186-residue polypeptide: Lumazine protein (186 aa).

Lumazine-binding repeat units lie at residues 1–96 (MFRG…VGRG) and 97–186 (GLTG…LNEW).

The cofactor is 6,7-dimethyl-8-(1-D-ribityl)lumazine.

Functionally, antenna protein that modulates the color of the bioluminescence emission of the luciferase. In the presence of LumP, luciferase emission is shifted to higher energy values (shorter wavelength). The polypeptide is Lumazine protein (lumP) (Photobacterium leiognathi).